A 311-amino-acid polypeptide reads, in one-letter code: Cytochrome f (311 aa).

An N-terminal signal peptide occupies residues 1-27 (MRRHLSLVLGSLVIGLALLIAPGASWA). The heme site is built by Tyr-28, Cys-48, Cys-51, and His-52. A helical membrane pass occupies residues 277–297 (IYGLLAFFAAVAIAQIMLVLK).

Belongs to the cytochrome f family. As to quaternary structure, the 4 large subunits of the cytochrome b6-f complex are cytochrome b6, subunit IV (17 kDa polypeptide, PetD), cytochrome f and the Rieske protein, while the 4 small subunits are PetG, PetL, PetM and PetN. The complex functions as a dimer. Heme serves as cofactor.

Its subcellular location is the cellular thylakoid membrane. Its function is as follows. Component of the cytochrome b6-f complex, which mediates electron transfer between photosystem II (PSII) and photosystem I (PSI), cyclic electron flow around PSI, and state transitions. The protein is Cytochrome f of Synechococcus sp. (strain CC9902).